Consider the following 726-residue polypeptide: Peroxisomal fatty acid beta-oxidation multifunctional protein (726 aa).

This sequence in the N-terminal section; belongs to the enoyl-CoA hydratase/isomerase family. The protein in the central section; belongs to the 3-hydroxyacyl-CoA dehydrogenase family. As to quaternary structure, monomer.

The protein localises to the peroxisome. It is found in the cytoplasm. The protein resides in the cytoskeleton. It catalyses the reaction a (3S)-3-hydroxyacyl-CoA = a (2E)-enoyl-CoA + H2O. The catalysed reaction is a 4-saturated-(3S)-3-hydroxyacyl-CoA = a (3E)-enoyl-CoA + H2O. It carries out the reaction a (3Z)-enoyl-CoA = a 4-saturated (2E)-enoyl-CoA. The enzyme catalyses a (3E)-enoyl-CoA = a 4-saturated (2E)-enoyl-CoA. It catalyses the reaction (3S)-3-hydroxybutanoyl-CoA = (3R)-3-hydroxybutanoyl-CoA. The catalysed reaction is a (3S)-3-hydroxyacyl-CoA + NAD(+) = a 3-oxoacyl-CoA + NADH + H(+). Its pathway is lipid metabolism; fatty acid beta-oxidation. Multifunctional enzyme involved in fatty acid beta-oxidation. Also binds to RNA and microtubules. Possible role in subcellular mRNA localization and RNA-cytoskeleton interactions. This is Peroxisomal fatty acid beta-oxidation multifunctional protein (MFP) from Oryza sativa subsp. japonica (Rice).